The following is a 547-amino-acid chain: Glucose-6-phosphate isomerase (547 aa).

Glu351 serves as the catalytic Proton donor. Residues His382 and Lys509 contribute to the active site.

The protein belongs to the GPI family.

The protein resides in the cytoplasm. It catalyses the reaction alpha-D-glucose 6-phosphate = beta-D-fructose 6-phosphate. It participates in carbohydrate biosynthesis; gluconeogenesis. The protein operates within carbohydrate degradation; glycolysis; D-glyceraldehyde 3-phosphate and glycerone phosphate from D-glucose: step 2/4. Its function is as follows. Catalyzes the reversible isomerization of glucose-6-phosphate to fructose-6-phosphate. The protein is Glucose-6-phosphate isomerase of Coxiella burnetii (strain RSA 493 / Nine Mile phase I).